A 210-amino-acid polypeptide reads, in one-letter code: MINIAKEHKVNEQIRVRQIRLIGGEGEQIGIIDTRDAMNMAREKGLDLVMVSPQAVPPVCRLLDYGRFRYEQQQNEKENRKRVRSQEVKAIKFRVKIDDHDFKTKTGHVRRFLDDGHKVKVTIMFRGRERTHPELGERILVRVAEALADVGTPEGMPSMMGMDMNMIMAPKQAPAPKKERTEESAEKAGSAGETEPVPAASAAAEAPANV.

A disordered region spans residues 169 to 210 (APKQAPAPKKERTEESAEKAGSAGETEPVPAASAAAEAPANV). The segment covering 176-186 (PKKERTEESAE) has biased composition (basic and acidic residues). Positions 187–210 (KAGSAGETEPVPAASAAAEAPANV) are enriched in low complexity.

The protein belongs to the IF-3 family. As to quaternary structure, monomer.

It localises to the cytoplasm. Its function is as follows. IF-3 binds to the 30S ribosomal subunit and shifts the equilibrium between 70S ribosomes and their 50S and 30S subunits in favor of the free subunits, thus enhancing the availability of 30S subunits on which protein synthesis initiation begins. This chain is Translation initiation factor IF-3, found in Deinococcus deserti (strain DSM 17065 / CIP 109153 / LMG 22923 / VCD115).